A 336-amino-acid polypeptide reads, in one-letter code: uncharacterized protein (336 aa).

The ATP-grasp domain maps to 123-323; the sequence is KTLMRDSGVP…YSSLINGILD (201 aa).

This sequence belongs to the D-alanine--D-alanine ligase family.

In terms of biological role, could be involved in the biosynthesis of a cell wall component. This is an uncharacterized protein from Sinorhizobium fredii (strain NBRC 101917 / NGR234).